Here is a 922-residue protein sequence, read N- to C-terminus: Chaperone protein ClpC, chloroplastic (922 aa).

The transit peptide at 1 to 72 (MARVLAQSLS…RPGLDFHSKV (72 aa)) directs the protein to the chloroplast. Residues 92–234 (FERFTEKAIK…RTQVIRMVGE (143 aa)) enclose the Clp R domain. Repeat regions lie at residues 95–160 (FTEK…IGRG) and 170–234 (FTPR…MVGE). The segment at 255–502 (LEEYGTNLTK…RVRLQHAQLP (248 aa)) is i. 300–307 (GEPGVGKT) is an ATP binding site. Residues 509–544 (DKEVRKIVKEKEEYVRNQDFEKAGELRDKEMDLKAQ) enclose the UVR domain. The II stretch occupies residues 569 to 760 (VTEVDIQHIV…LLIMTSNVGS (192 aa)). 643–650 (GPTGVGKS) contacts ATP.

Belongs to the ClpA/ClpB family. ClpC subfamily.

It localises to the plastid. It is found in the chloroplast. Functionally, molecular chaperone that may interact with a ClpP-like protease involved in degradation of denatured proteins in the chloroplast. The protein is Chaperone protein ClpC, chloroplastic of Pisum sativum (Garden pea).